Here is a 132-residue protein sequence, read N- to C-terminus: L-ectoine synthase (132 aa).

Belongs to the ectoine synthase family.

It carries out the reaction (2S)-4-acetamido-2-aminobutanoate = L-ectoine + H2O. It participates in amine and polyamine biosynthesis; ectoine biosynthesis; L-ectoine from L-aspartate 4-semialdehyde: step 3/3. Catalyzes the circularization of gamma-N-acetyl-alpha,gamma-diaminobutyric acid (ADABA) to ectoine (1,4,5,6-tetrahydro-2-methyl-4-pyrimidine carboxylic acid), which is an excellent osmoprotectant. This chain is L-ectoine synthase, found in Rhodococcus erythropolis (strain PR4 / NBRC 100887).